A 483-amino-acid polypeptide reads, in one-letter code: Regulatory protein ViaA (483 aa).

Belongs to the ViaA family. In terms of assembly, homodimer. Interacts with RavA.

The protein resides in the cytoplasm. Functionally, component of the RavA-ViaA chaperone complex, which may act on the membrane to optimize the function of some of the respiratory chains. ViaA stimulates the ATPase activity of RavA. This chain is Regulatory protein ViaA, found in Salmonella choleraesuis (strain SC-B67).